Here is a 286-residue protein sequence, read N- to C-terminus: Interferon-induced 35 kDa protein (286 aa).

The tract at residues 5–26 is leucine-zipper; it reads LDAALHALQEEQARLKMRLWDL. 2 NID domains span residues 81-170 and 183-266; these read ALIT…GDVD and FARD…GEVE.

The protein belongs to the NMI family. As to quaternary structure, homodimer. Also interacts with BATF. Interacts with TRIM21. Interacts with NMI; the interaction is direct and is facilitated by TRIM21. In terms of processing, phosphorylated. Dephosphorylation correlates with the formation of a complex with NMI. Expressed in a wide range of cell types, including fibroblasts, macrophages, and epithelial cells.

The protein localises to the cytoplasm. Its subcellular location is the nucleus. It localises to the secreted. In terms of biological role, acts as a signaling pathway regulator involved in innate immune system response. In response to interferon IFN-alpha, associates in a complex with signaling pathway regulator NMI to regulate immune response; the complex formation prevents proteasome-mediated degradation of IFI35 and correlates with IFI35 dephosphorylation. In complex with NMI, inhibits virus-triggered type I interferon/IFN-beta production. In complex with NMI, negatively regulates nuclear factor NF-kappa-B signaling by inhibiting the nuclear translocation, activation and transcription of the NF-kappa-B subunit p65/RELA, resulting in the inhibition of endothelial cell proliferation, migration and re-endothelialization of injured arteries. Beside its role as an intracellular signaling pathway regulator, also functions extracellularly as damage-associated molecular patterns (DAMPs) to promote inflammation when actively released by macrophage to the extracellular space during cell injury and pathogen invasion. Macrophage-secreted IFI35 activates NF-kappa-B signaling in adjacent macrophages through Toll-like receptor 4/TLR4 activation, thereby inducing NF-kappa-B translocation from the cytoplasm into the nucleus which promotes the release of pro-inflammatory cytokines. In Homo sapiens (Human), this protein is Interferon-induced 35 kDa protein.